Here is a 2376-residue protein sequence, read N- to C-terminus: Protein Ycf2 (2376 aa).

Disordered regions lie at residues 173 to 194 (SSQL…GTED), 226 to 256 (TEIE…EMNN), and 952 to 1011 (KRKK…KRKE). Residues 235-245 (KGLSGSSSKSR) are compositionally biased toward low complexity. Composition is skewed to basic and acidic residues over residues 246–255 (LFTEGEKEMN) and 960–1009 (KRKE…PEKR). 1441–1448 (GSIGSGRS) contributes to the ATP binding site. Disordered stretches follow at residues 1515–1534 (YEDR…DYEP), 1860–2046 (LVGS…LRPK), and 2112–2230 (PAEE…DGFS). Positions 1866 to 2025 (TEEEVEGTEE…GEGTEDEEGE (160 aa)) are enriched in acidic residues. Basic and acidic residues predominate over residues 2026–2038 (GTEKDSSQFDNDR). Composition is skewed to acidic residues over residues 2112–2129 (PAEE…EALE) and 2136–2213 (GEEE…ENDS).

The protein belongs to the Ycf2 family.

The protein localises to the plastid. It is found in the chloroplast stroma. Its function is as follows. Probable ATPase of unknown function. Its presence in a non-photosynthetic plant (Epifagus virginiana) and experiments in tobacco indicate that it has an essential function which is probably not related to photosynthesis. The chain is Protein Ycf2 from Oenothera glazioviana (Large-flowered evening primrose).